Reading from the N-terminus, the 225-residue chain is UPF0758 protein BCE_4545 (225 aa).

Positions Ser103–Ile225 constitute an MPN domain. Zn(2+) contacts are provided by His174, His176, and Asp187. Residues His174 to Asp187 carry the JAMM motif motif.

Belongs to the UPF0758 family.

This Bacillus cereus (strain ATCC 10987 / NRS 248) protein is UPF0758 protein BCE_4545.